We begin with the raw amino-acid sequence, 296 residues long: Acetyl-coenzyme A carboxylase carboxyl transferase subunit beta (296 aa).

The 270-residue stretch at Val25 to Glu294 folds into the CoA carboxyltransferase N-terminal domain. Zn(2+) contacts are provided by Cys29, Cys32, Cys48, and Cys51. The C4-type zinc-finger motif lies at Cys29–Cys51.

It belongs to the AccD/PCCB family. In terms of assembly, acetyl-CoA carboxylase is a heterohexamer composed of biotin carboxyl carrier protein (AccB), biotin carboxylase (AccC) and two subunits each of ACCase subunit alpha (AccA) and ACCase subunit beta (AccD). Requires Zn(2+) as cofactor.

The protein localises to the cytoplasm. The enzyme catalyses N(6)-carboxybiotinyl-L-lysyl-[protein] + acetyl-CoA = N(6)-biotinyl-L-lysyl-[protein] + malonyl-CoA. It participates in lipid metabolism; malonyl-CoA biosynthesis; malonyl-CoA from acetyl-CoA: step 1/1. Its function is as follows. Component of the acetyl coenzyme A carboxylase (ACC) complex. Biotin carboxylase (BC) catalyzes the carboxylation of biotin on its carrier protein (BCCP) and then the CO(2) group is transferred by the transcarboxylase to acetyl-CoA to form malonyl-CoA. This chain is Acetyl-coenzyme A carboxylase carboxyl transferase subunit beta, found in Haemophilus influenzae (strain 86-028NP).